We begin with the raw amino-acid sequence, 177 residues long: Large ribosomal subunit protein uL10 (177 aa).

This sequence belongs to the universal ribosomal protein uL10 family. Part of the ribosomal stalk of the 50S ribosomal subunit. The N-terminus interacts with L11 and the large rRNA to form the base of the stalk. The C-terminus forms an elongated spine to which L12 dimers bind in a sequential fashion forming a multimeric L10(L12)X complex.

Forms part of the ribosomal stalk, playing a central role in the interaction of the ribosome with GTP-bound translation factors. This Mycobacterium leprae (strain Br4923) protein is Large ribosomal subunit protein uL10.